A 122-amino-acid polypeptide reads, in one-letter code: Holo-[acyl-carrier-protein] synthase (122 aa).

Mg(2+)-binding residues include D8 and E52.

The protein belongs to the P-Pant transferase superfamily. AcpS family. The cofactor is Mg(2+).

The protein localises to the cytoplasm. The enzyme catalyses apo-[ACP] + CoA = holo-[ACP] + adenosine 3',5'-bisphosphate + H(+). In terms of biological role, transfers the 4'-phosphopantetheine moiety from coenzyme A to a Ser of acyl-carrier-protein. The sequence is that of Holo-[acyl-carrier-protein] synthase from Lachnoclostridium phytofermentans (strain ATCC 700394 / DSM 18823 / ISDg) (Clostridium phytofermentans).